Consider the following 3068-residue polypeptide: MATSVIQFGSFVCNLPKSQPLCTTVHCPKQSMSTNIVRPSDPFAELEKHLEPYLQKRMDATIRQTKGGTLVYKHMSEAKRARKLRKKQREEEEVRLFMNAAPYIVSNITIGGGEVPSKMEEVSIKRPLNKTPSRKIKKSLTPVTFRDGHMNKFLRELRDCATRNSMTVHLIGKRKTELAFKRRASLNAVYATLHHMRGVDRKRDIVLEEWMNDYVLNLSKVSTWGSLFHAESLKRGDSGLILNARALRGKFGRCSRGFFIVRGKSDGVVLDARSKLSMATVTHMEQYSTPEAFWSGLEKKWSVVRKPTAHTCKPTYSVSNCGEVAAIIAQALFPCHKLTCGECSKEICDLTSNECVQELYKNTSLALERMNNLHPEFQHIVKVLSVVRQLTEASNHGTETFDEIFKMIGSKTQSPFTHLNKLNEFMLKGNENTSGEWLTARQHLRELVRFQKNRTDNIKKGDLASFRNKLSARAQYNLYLSCDNQLDKNASFLWGQREYHARRFFLNFFQQIDPSKGYLAYEDRTIPNGSRKLAIGNLIVPLDLAEFRKRMNGIDTQQPPIGKYCTSQLDGNFVYPCCCTTLDDGQPIRSAVYAPTKKHLVVGNTGDTKYINLPKGDTEMLYIALDGYCYINIYLAMLVNISEEEAKDFTKKVRDIFMPKLGKWPTLMDLATTCAQLRIFHPDVHDAELPRILVDHNTQTCHVVDSYGSISTGYHILKAATVSQLVLFADDNLESEIKHYRVGGIVENHKVQIDNQPSRCGVSEFHAIRMLIKGIYRPSVMYELLSEEPYLLVFSILSPSILIAMYNDRAFELAVQIWLEKEQSIPLIATILTNLAAKVSVATTLVQQLQLIELSADQLLNVTCDGFRVSFAYQSALTLLTRMRDQAKANSELISGGFNEYDQDLAWTLEKNYQGLLHDQWKELSSLEKFRYYWSSRKRKTRLRSNIKSRSSPVASAISSLSLKPFMGKVFSHMKAGAVCTKQGTKNFIDARCLGISTYFVGSLMRKFPSAKVLLSSLFVLGALLNITHAANRIIIDNRISREHAAALELYRKEDTCHELYTALERKLGEKPTWDEYCSYVAKINPAMLEFIKDSYDEKQVVHQRSTEDLKKVEHIIAFVTLAIMLFDSERSDCVFKTLNKFKGVVCSLGSGVRHQSLDDFVSTMDEKNFVVDFELNDSVQRKNLTTEITFESWWDEQVARGFTIPHYRTEGRFMEFTRATAAKVASDISISSERDFLIRGAVGSGKSTGLPHHLSTYGRVLLIEPTRPLAENVFKQLSGGPFFLKPTMRMRGNSVFGSSPISVMTSGFALHFFANNITQLQEIQFIIIDECHVMDASSMAFRSLIHTYHTNCKVLKVSATPPGREVEFTTQFPVKLVVEDSLSFKTFVESQGTGSNCDMIQYGNNLLVYVASYNEVDQLSKLLVAREFNVTKVDGRTMKHGELEIVTRGTKSKPHFVVATNIIENGVTLDIDVVIDFGMKVSPFLDVDNRSVAYNKVSISYGERIQRLGRVGRIQKGTALRIGHTEKGLIEIPQMISTEAALYCFAYNLPVMSSGVSTSMIKNCTIPQVRTMHTFELSPFFMYNFVSHDGTMHPVVHETLKRYKLRDSVIPLSESSIPYRASSDWITAGDYRRIGVKLDIPDETRIAFHIKTFHRKFTNNLWESVLKYKASAAFPTLRSSSITKIAYTLSTDLYAIPRTLAVVESLLEDERTKQYQFKSLIDNGCSSMFSVVGISNALRAKYSKDHTVENINKLETVKAQLKEFHNLNGSGDELNLIKRFESLQFVHHQSKSSLAKALGLRGVWNKSLIVRDAIIAAGVACGGAWLLYTWFTAKMSEVSHQGRSKTKRIQALKFRKARDKRAGFEIDNNEDTIEEYFGSAYTKKGKGKGTTVGMGRTNRRFINMYGFEPGQFSYIKFVDPLTGAQMEENVYADIVDVQEKFGDIRRQMILDDELDRRQTDVHNTIHAYLIKDWSNKALKVDLTPHNPLRVSDKASAIMKFPEREGELRQTGQAVEVDVCDIPKEVVKHEAKTLMRGLRDYNPIAQTVCKLTVKSELGETSTYGLGFGGLIIANHHLFKSFNGSLEVKSHHGVFRVPNLMAISVLPLKGRDMIIIKMPKDFPVFPQRLKFREPASTDRVCLIGSNFQERYISTTVSEISATHPVPRSTFWKHWISTDDGHCGLPIVSTTDGFILGLHSLANNRNSENYYTAFDSDFEMKILRSGENTEWVKNWKYNPDTVLWGPLQLTKGTPSGMFKTTKMIEDLLAFKSESVREQAHTSSWMLEVLKENLKAIAYMKSQLVTKHVVKGECMMFKQYLQENPRANEFFQPKMWAYGKSMLNKEAYIKDIMKYSKVIDVGVVDCDRHLRKLSLELLYTQIHGFRKCSYITDEEEIFKALNITTAVGAMYGGKKKEYFEKFTTEDKAEILRQSCLRLYTGKLGVWEWALKAELRSKEKIEANKTRTFTAAPIDTLLGGKVCVDDLNNQFYSKNIECCWTVGMTKFYGGWDKLLTALPAGWIYCDADGSQFDSSLTPYLINAVLTIRYAFMEDWDIGYKMLQNLYTEIIYTPISTPDGTIVKKFRGNNSGQPSTVVDNSLMVVLAMHYAFVREGIAFEEIDSICKFFVNGDDLLIAVNPERESLLDTLSNHFSDLGLNYDFSSRTRNKSELWFMSHCGISVEGTYIPKLEEERIVSILQWDRAELPEYRLEAICAAMIESWGYPQLTHEIRRFYSWLIEKNPYADLASEGKAPYISELALKKLYLNQDVQMMSFRSYLKYFADADEEFECGTYEVRHQSSSRSDTLDAGEEKKKNKEVATVSDGMGKKEVESTRDSDVNAGTVGTFTIPRIKSITEKMRMPKQKRKGVLNLAHLLEYKPSQVDISNTRSTQAQFDNWYCEVMKAYDLQEEAMGTVMNGLMVWCIENGTSPNISGTWTMMDGDEQVEFPLKPVIENAKPTFRQIMAHFSDVAEAYIEMRNKQEPYMPRYGLVRNLRDMGLARYAFDFYEVTSRTSTRAREAHIQMKAAALKSAQTRLFGLDGGIGTQGENTERHTTEDVSPDMHTLLGVREM.

One can recognise a Peptidase S30 domain in the interval 144–287 (TFRDGHMNKF…MATVTHMEQY (144 aa)). Residues His195, Asp204, and Ser238 each act as for P1 proteinase activity in the active site. An Involved in interaction with stylet and aphid transmission motif is present at residues 337 to 340 (KLTC). The Involved in virions binding and aphid transmission motif lies at 595–597 (PTK). The Peptidase C6 domain maps to 621 to 743 (LYIALDGYCY…ESEIKHYRVG (123 aa)). Catalysis depends on for helper component proteinase activity residues Cys629 and His702. Residues 1228 to 1380 (DISISSERDF…TQFPVKLVVE (153 aa)) enclose the Helicase ATP-binding domain. ATP is bound at residue 1241-1248 (GAVGSGKS). Positions 1330 to 1333 (DECH) match the DECH box motif. A Helicase C-terminal domain is found at 1399–1558 (DMIQYGNNLL…NLPVMSSGVS (160 aa)). The Nuclear localization signal motif lies at 1884 to 1891 (KKGKGKGT). Position 1906 is an O-(5'-phospho-RNA)-tyrosine (Tyr1906). Residues 2031 to 2249 (AKTLMRGLRD…VLWGPLQLTK (219 aa)) enclose the Peptidase C4 domain. Residues His2076, Asp2111, and Cys2181 each act as for nuclear inclusion protein A activity in the active site. In terms of domain architecture, RdRp catalytic spans 2518–2642 (WIYCDADGSQ…AVNPERESLL (125 aa)). Residues 2796–2833 (SSSRSDTLDAGEEKKKNKEVATVSDGMGKKEVESTRDS) are disordered. Basic and acidic residues predominate over residues 2822-2833 (MGKKEVESTRDS). Residue Thr3051 is modified to Phosphothreonine.

The protein belongs to the potyviridae genome polyprotein family. Interacts with host eIF4E protein (via cap-binding region); this interaction mediates the translation of the VPg-viral RNA conjugates. Part of a complex that comprises VPg, RNA, host EIF4E and EIF4G; this interaction mediates the translation of the VPg-viral RNA conjugates. VPg is uridylylated by the polymerase and is covalently attached to the 5'-end of the genomic RNA. This uridylylated form acts as a nucleotide-peptide primer for the polymerase. Post-translationally, potyviral RNA is expressed as two polyproteins which undergo post-translational proteolytic processing. Genome polyprotein is processed by NIa-pro, P1 and HC-pro proteinases resulting in the production of at least ten individual proteins. P3N-PIPO polyprotein is cleaved by P1 and HC-pro proteinases resulting in the production of three individual proteins. The P1 proteinase and the HC-pro cleave only their respective C-termini autocatalytically. 6K1 is essential for proper proteolytic separation of P3 from CI.

It is found in the host cytoplasmic vesicle. Its subcellular location is the host nucleus. The protein resides in the virion. It carries out the reaction RNA(n) + a ribonucleoside 5'-triphosphate = RNA(n+1) + diphosphate. The catalysed reaction is Hydrolyzes glutaminyl bonds, and activity is further restricted by preferences for the amino acids in P6 - P1' that vary with the species of potyvirus, e.g. Glu-Xaa-Xaa-Tyr-Xaa-Gln-|-(Ser or Gly) for the enzyme from tobacco etch virus. The natural substrate is the viral polyprotein, but other proteins and oligopeptides containing the appropriate consensus sequence are also cleaved.. The enzyme catalyses Hydrolyzes a Gly-|-Gly bond at its own C-terminus, commonly in the sequence -Tyr-Xaa-Val-Gly-|-Gly, in the processing of the potyviral polyprotein.. Required for aphid transmission and also has proteolytic activity. Only cleaves a Gly-Gly dipeptide at its own C-terminus. Interacts with virions and aphid stylets. Acts as a suppressor of RNA-mediated gene silencing, also known as post-transcriptional gene silencing (PTGS), a mechanism of plant viral defense that limits the accumulation of viral RNAs. May have RNA-binding activity. Its function is as follows. Has helicase activity. It may be involved in replication. In terms of biological role, indispensable for virus replication. Reduces the abundance of host transcripts related to jasmonic acid biosynthesis therefore altering the host defenses. In order to increase its own stability, decreases host protein degradation pathways. Functionally, indispensable for virus replication. Mediates the cap-independent, EIF4E-dependent translation of viral genomic RNAs. Binds to the cap-binding site of host EIF4E and thus interferes with the host EIF4E-dependent mRNA export and translation. VPg-RNA directly binds EIF4E and is a template for transcription. Also forms trimeric complexes with EIF4E-EIF4G, which are templates for translation. Its function is as follows. Has RNA-binding and proteolytic activities. In terms of biological role, an RNA-dependent RNA polymerase that plays an essential role in the virus replication. Functionally, involved in aphid transmission, cell-to-cell and systemis movement, encapsidation of the viral RNA and in the regulation of viral RNA amplification. The sequence is that of Genome polyprotein from Pepper mottle virus (isolate California) (PeMV).